Reading from the N-terminus, the 354-residue chain is 3-isopropylmalate dehydrogenase (354 aa).

76–87 contributes to the NAD(+) binding site; sequence GPRWDSAKERPE. Substrate contacts are provided by Arg94, Arg104, Arg130, and Asp215. Mg(2+) contacts are provided by Asp215, Asp239, and Asp243. 273 to 285 lines the NAD(+) pocket; the sequence is GSAPDIAGKNKAN.

This sequence belongs to the isocitrate and isopropylmalate dehydrogenases family. LeuB type 1 subfamily. In terms of assembly, homodimer. Mg(2+) serves as cofactor. Mn(2+) is required as a cofactor.

The protein localises to the cytoplasm. It catalyses the reaction (2R,3S)-3-isopropylmalate + NAD(+) = 4-methyl-2-oxopentanoate + CO2 + NADH. It participates in amino-acid biosynthesis; L-leucine biosynthesis; L-leucine from 3-methyl-2-oxobutanoate: step 3/4. In terms of biological role, catalyzes the oxidation of 3-carboxy-2-hydroxy-4-methylpentanoate (3-isopropylmalate) to 3-carboxy-4-methyl-2-oxopentanoate. The product decarboxylates to 4-methyl-2 oxopentanoate. In Bacillus cereus (strain ATCC 14579 / DSM 31 / CCUG 7414 / JCM 2152 / NBRC 15305 / NCIMB 9373 / NCTC 2599 / NRRL B-3711), this protein is 3-isopropylmalate dehydrogenase.